Reading from the N-terminus, the 108-residue chain is Protein U4 (108 aa).

The helical transmembrane segment at 5 to 25 threads the bilayer; that stretch reads FLLFSLLFVVFLQPALVFNMV.

Belongs to the nanovirus U4 protein family.

The protein resides in the membrane. The chain is Protein U4 (DNA-U4) from Astragalus sinicus (Chinese milk vetch).